The following is an 852-amino-acid chain: MTERIPLFEEDKDYIDEDHISEFAKALVWQDDYDYDANTTATTDITTTPINDEVPGIVSSLPSTNGNNKNKNKDINGTVSDSSSITDEDIMNSSYFDKPHSSTNLKSNSTKNDDDDDDDDDDLISRPQSGTTDNTSTTSLSSKRPDLITSKSDWFPIGGSRSSSSSKKGSSNYHKKTTPTSSTSTKSTIEILKNEFRNSSTYTLLRWPILIFVFSWIGILGIFYFMIRIYVAVSEYLFTWRGERKRLRNKLRNSKTYEEWINNALELDKFLKLDKWSENPKFSYYDYKTIKLTILKLQKLRHQGKLIELMVILQGCLKKNFAGIENRQLYSHRYYGTKNLVEEYYQEVVKCLELINQDNNNGDDNDDDDNDNEKIDIEKKWKFFKIVSKNYGKSALCLSGGACFAYTHFGIAKALLDQNLLPQIISGTSGGGLIAALLCTRTNEELKKLLVPQLARKITACEDPWYIWIPRFLKTGARFDAIDWARKSNFFTHGSTTFEEAFQRTGRKLNISTIPADPHSPVILCNDITSPHCIIWSTLLASSAVPGILNPVVLMMKNPINGKVIPFSLGSKWRDGSLRTDIPIEALNTYYNVNFTIVSQVNPHISLFFFAPKGTVGRPVTSSTRKTRSKQQYASFRGGFIATALEQLLRLEIKKWLQIIKSLDLLPHFLQQDWSNIWLQNFTGTITIWPKNKLSDFWYILSDPTEFRMKEIIEKGEKCMFPRLLFIKHRASIENVIEKGKKLTLTKYKQLKSGGVDCDEDVDVDVDIDDEEEEGESGGVVSDYDAQSFQKVVGWSNEDKKLLDELDNEDEEEDEEEEEVDVDDDDDDDDDSLSDSFEITTEHLKQRRNTIF.

Low complexity predominate over residues 41–52; that stretch reads ATTDITTTPIND. The segment at 41–184 is disordered; it reads ATTDITTTPI…KKTTPTSSTS (144 aa). Positions 75–95 are enriched in polar residues; it reads INGTVSDSSSITDEDIMNSSY. A compositionally biased stretch (low complexity) spans 101–110; it reads SSTNLKSNST. A compositionally biased stretch (acidic residues) spans 113–122; that stretch reads DDDDDDDDDD. Low complexity-rich tracts occupy residues 129 to 142 and 158 to 171; these read SGTT…SLSS and GGSR…KGSS. A helical membrane pass occupies residues 207–227; that stretch reads WPILIFVFSWIGILGIFYFMI. Residues 396–588 form the PNPLA domain; the sequence is LCLSGGACFA…RTDIPIEALN (193 aa). Positions 427 to 431 match the GXSXG motif; it reads GTSGG. S429 acts as the Nucleophile in catalysis. D575 acts as the Proton acceptor in catalysis. Residues 800 to 840 form a disordered region; the sequence is KKLLDELDNEDEEEDEEEEEVDVDDDDDDDDDSLSDSFEIT. The span at 805 to 833 shows a compositional bias: acidic residues; it reads ELDNEDEEEDEEEEEVDVDDDDDDDDDSL.

The protein belongs to the PLPL family.

It localises to the membrane. Probable lipid hydrolase. The chain is Patatin-like phospholipase domain-containing protein CaO19.1504 from Candida albicans (strain SC5314 / ATCC MYA-2876) (Yeast).